A 610-amino-acid chain; its full sequence is Elongation factor 4 (610 aa).

A tr-type G domain is found at 11-193 (EKIRNFSIIA…QIVEKVPAPT (183 aa)). GTP contacts are provided by residues 23–28 (DHGKST) and 140–143 (NKID).

It belongs to the TRAFAC class translation factor GTPase superfamily. Classic translation factor GTPase family. LepA subfamily.

Its subcellular location is the cell membrane. The catalysed reaction is GTP + H2O = GDP + phosphate + H(+). In terms of biological role, required for accurate and efficient protein synthesis under certain stress conditions. May act as a fidelity factor of the translation reaction, by catalyzing a one-codon backward translocation of tRNAs on improperly translocated ribosomes. Back-translocation proceeds from a post-translocation (POST) complex to a pre-translocation (PRE) complex, thus giving elongation factor G a second chance to translocate the tRNAs correctly. Binds to ribosomes in a GTP-dependent manner. The protein is Elongation factor 4 of Streptococcus agalactiae serotype Ia (strain ATCC 27591 / A909 / CDC SS700).